We begin with the raw amino-acid sequence, 426 residues long: UPF0164 protein TP_0548 (426 aa).

The signal sequence occupies residues 1-37; it reads MISCSVRRRPRWEPQVGAAFLAFALLPVLASGRGMQA.

It belongs to the UPF0164 family.

This chain is UPF0164 protein TP_0548, found in Treponema pallidum (strain Nichols).